Reading from the N-terminus, the 142-residue chain is Phosphoribosyl-AMP cyclohydrolase (142 aa).

A Mg(2+)-binding site is contributed by aspartate 92. Position 93 (cysteine 93) interacts with Zn(2+). Aspartate 94 and aspartate 96 together coordinate Mg(2+). Positions 109 and 116 each coordinate Zn(2+).

This sequence belongs to the PRA-CH family. Homodimer. The cofactor is Mg(2+). Requires Zn(2+) as cofactor.

It is found in the cytoplasm. It carries out the reaction 1-(5-phospho-beta-D-ribosyl)-5'-AMP + H2O = 1-(5-phospho-beta-D-ribosyl)-5-[(5-phospho-beta-D-ribosylamino)methylideneamino]imidazole-4-carboxamide. It functions in the pathway amino-acid biosynthesis; L-histidine biosynthesis; L-histidine from 5-phospho-alpha-D-ribose 1-diphosphate: step 3/9. In terms of biological role, catalyzes the hydrolysis of the adenine ring of phosphoribosyl-AMP. The polypeptide is Phosphoribosyl-AMP cyclohydrolase (Halorhodospira halophila (strain DSM 244 / SL1) (Ectothiorhodospira halophila (strain DSM 244 / SL1))).